Consider the following 423-residue polypeptide: Galactosylceramide sulfotransferase (423 aa).

At 1–12 (MTLLPKKPCKSK) the chain is on the cytoplasmic side. The chain crosses the membrane as a helical; Signal-anchor for type II membrane protein span at residues 13–35 (AKGLLLGALFTSFLLLLYSYVVP). Over 36–423 (PLYPNMAFTT…WKFLRDFLRW (388 aa)) the chain is Lumenal. Residues Asn66 and Asn312 are each glycosylated (N-linked (GlcNAc...) asparagine).

The protein belongs to the galactose-3-O-sulfotransferase family. As to expression, expressed in brain, testis, kidney, stomach, small intestine, liver, and lung. Not detected in heart, skeletal muscle, and spleen.

The protein resides in the golgi apparatus membrane. The catalysed reaction is a beta-D-galactosyl-(1&lt;-&gt;1')-N-acylsphing-4-enine + 3'-phosphoadenylyl sulfate = an N-acyl-1-beta-D-(3-O-sulfo)-galactosyl-sphing-4-enine + adenosine 3',5'-bisphosphate + H(+). The enzyme catalyses a 1-O-alkyl-2-acyl-3-O-(beta-D-galactosyl)-sn-glycerol + 3'-phosphoadenylyl sulfate = a 1-O-alkyl-2-acyl-3-(beta-D-3-sulfogalactosyl)-sn-glycerol + adenosine 3',5'-bisphosphate + H(+). It carries out the reaction a beta-D-Gal-(1&lt;-&gt;1')-ceramide + 3'-phosphoadenylyl sulfate = 1-(3-O-sulfo-beta-D-galactosyl)-ceramide + adenosine 3',5'-bisphosphate + H(+). It catalyses the reaction a 1,2-diacyl-3-O-(beta-D-galactosyl)-sn-glycerol + 3'-phosphoadenylyl sulfate = 1,2-diacyl-3-(3-O-sulfo-beta-D-galactosyl)-sn-glycerol + adenosine 3',5'-bisphosphate + H(+). The catalysed reaction is a beta-D-Gal-(1-&gt;4)-beta-D-Glc-(1&lt;-&gt;1)-Cer(d18:1(4E)) + 3'-phosphoadenylyl sulfate = beta-D-3-sulfogalactosyl-(1-&gt;4)-beta-D-glucosyl-(1&lt;-&gt;1')-N-acylsphing-4-enine + adenosine 3',5'-bisphosphate + H(+). The protein operates within lipid metabolism; sphingolipid metabolism. Its function is as follows. Catalyzes the transfer of a sulfate group to position 3 of non-reducing beta-galactosyl residues in glycerolipids and sphingolipids, therefore participates in the biosynthesis of sulfoglycolipids. Catalyzes the synthesis of galactosylceramide sulfate (sulfatide), a major lipid component of the myelin sheath and of monogalactosylalkylacylglycerol sulfate (seminolipid), present in spermatocytes. Seems to prefer beta-glycosides at the non-reducing termini of sugar chains attached to a lipid moiety. Also acts on lactosylceramide, galactosyl 1-alkyl-2-sn-glycerol and galactosyl diacylglycerol (in vitro). The sequence is that of Galactosylceramide sulfotransferase from Mus musculus (Mouse).